The primary structure comprises 349 residues: Phosphoribosylformylglycinamidine cyclo-ligase (349 aa).

The protein belongs to the AIR synthase family.

The protein localises to the cytoplasm. It carries out the reaction 2-formamido-N(1)-(5-O-phospho-beta-D-ribosyl)acetamidine + ATP = 5-amino-1-(5-phospho-beta-D-ribosyl)imidazole + ADP + phosphate + H(+). The protein operates within purine metabolism; IMP biosynthesis via de novo pathway; 5-amino-1-(5-phospho-D-ribosyl)imidazole from N(2)-formyl-N(1)-(5-phospho-D-ribosyl)glycinamide: step 2/2. In Lawsonia intracellularis (strain PHE/MN1-00), this protein is Phosphoribosylformylglycinamidine cyclo-ligase.